Here is a 424-residue protein sequence, read N- to C-terminus: MSYLFTSESVSEGHPDKVADQISDAILDYFIAYDTNSKVACETLVTSGQIILAGEVKSKVYLDIPEIVREVIEGIGYTKSEYHFESKSSGIISLIHEQSNDISRGIERESPLDQGAGDQGMMFGYATNETANYIPLSLDLSHQLMKELTNIRKYEPELMPYLRPDAKSQVTIRYHDNDIPKSIDTIVISTQHDEFDTAEVMQSKIMKDVRNILIPRIKANYSENIQALFDDKIKYYINPTGKFVIGGPHGDAGLTGRKIIVDTYGGRGAHGGGAFSGKDPSKVDRSAAYAARHIAKNLVAAGVSEEVLVQVSYAIGVTKPINIFVNTYGKSKVKLTDSQIAERVLEIFDLRPKAIENRLKLRNPIYKETAAYGHMGRLPKIVKKVFTPRYANVAKSKDLKKELKVELFTWEKLDYVKKIRKIFQ.

Histidine 14 lines the ATP pocket. Position 16 (aspartate 16) interacts with Mg(2+). Residue glutamate 42 coordinates K(+). L-methionine is bound by residues glutamate 55 and glutamine 98. The flexible loop stretch occupies residues glutamine 98–arginine 108. ATP contacts are provided by residues aspartate 165–lysine 167, lysine 242–phenylalanine 243, aspartate 251, arginine 257–lysine 258, alanine 274, and lysine 278. L-methionine is bound at residue aspartate 251. An L-methionine-binding site is contributed by lysine 282.

The protein belongs to the AdoMet synthase family. In terms of assembly, homotetramer; dimer of dimers. It depends on Mg(2+) as a cofactor. K(+) is required as a cofactor.

Its subcellular location is the cytoplasm. It carries out the reaction L-methionine + ATP + H2O = S-adenosyl-L-methionine + phosphate + diphosphate. Its pathway is amino-acid biosynthesis; S-adenosyl-L-methionine biosynthesis; S-adenosyl-L-methionine from L-methionine: step 1/1. In terms of biological role, catalyzes the formation of S-adenosylmethionine (AdoMet) from methionine and ATP. The overall synthetic reaction is composed of two sequential steps, AdoMet formation and the subsequent tripolyphosphate hydrolysis which occurs prior to release of AdoMet from the enzyme. This Azobacteroides pseudotrichonymphae genomovar. CFP2 protein is S-adenosylmethionine synthase.